A 123-amino-acid polypeptide reads, in one-letter code: UPF0102 protein mma_0204 (123 aa).

The protein belongs to the UPF0102 family.

The protein is UPF0102 protein mma_0204 of Janthinobacterium sp. (strain Marseille) (Minibacterium massiliensis).